The chain runs to 140 residues: Natriuretic peptides A (140 aa).

The signal sequence occupies residues 1–24 (MDTRGSFSCGFLLLLLIQLQPSRA). Residues 25–111 (NPIYNLSPAK…KRLRGVQMPR (87 aa)) constitute a propeptide that is removed on maturation. The tract at residues 55–94 (ALESNPDLQEPQTQEEIPPELTDDSDEQKAEPKLASNTPL) is disordered. Residues 71–80 (IPPELTDDSD) are compositionally biased toward acidic residues. A disulfide bridge links Cys118 with Cys134.

Belongs to the natriuretic peptide family. Cleaved by CORIN upon secretion to produce the functional hormone.

It is found in the secreted. Functionally, hormone playing a key role in cardiovascular homeostasis through regulation of natriuresis, diuresis, and vasodilation. Specifically binds and stimulates the cGMP production of the NPR1 receptor. Binds the clearance receptor NPR3. The polypeptide is Natriuretic peptides A (NPPA) (Gallus gallus (Chicken)).